Consider the following 239-residue polypeptide: Ribose-5-phosphate isomerase A (239 aa).

Residues 39 to 42 (SGST), 95 to 98 (DGAD), and 108 to 111 (KGGG) contribute to the substrate site. The active-site Proton acceptor is Glu-117. Lys-135 lines the substrate pocket.

Belongs to the ribose 5-phosphate isomerase family. As to quaternary structure, homodimer.

The catalysed reaction is aldehydo-D-ribose 5-phosphate = D-ribulose 5-phosphate. Its pathway is carbohydrate degradation; pentose phosphate pathway; D-ribose 5-phosphate from D-ribulose 5-phosphate (non-oxidative stage): step 1/1. In terms of biological role, catalyzes the reversible conversion of ribose-5-phosphate to ribulose 5-phosphate. This Chlamydia muridarum (strain MoPn / Nigg) protein is Ribose-5-phosphate isomerase A.